Consider the following 160-residue polypeptide: 6,7-dimethyl-8-ribityllumazine synthase (160 aa).

5-amino-6-(D-ribitylamino)uracil is bound by residues W27, 59–61 (AIE), and 81–83 (VVI). 86–87 (QT) lines the (2S)-2-hydroxy-3-oxobutyl phosphate pocket. The Proton donor role is filled by H89. N114 contacts 5-amino-6-(D-ribitylamino)uracil. R128 contributes to the (2S)-2-hydroxy-3-oxobutyl phosphate binding site.

Belongs to the DMRL synthase family. As to quaternary structure, homopentamer.

It catalyses the reaction (2S)-2-hydroxy-3-oxobutyl phosphate + 5-amino-6-(D-ribitylamino)uracil = 6,7-dimethyl-8-(1-D-ribityl)lumazine + phosphate + 2 H2O + H(+). Its pathway is cofactor biosynthesis; riboflavin biosynthesis; riboflavin from 2-hydroxy-3-oxobutyl phosphate and 5-amino-6-(D-ribitylamino)uracil: step 1/2. Functionally, catalyzes the formation of 6,7-dimethyl-8-ribityllumazine by condensation of 5-amino-6-(D-ribitylamino)uracil with 3,4-dihydroxy-2-butanone 4-phosphate. This is the penultimate step in the biosynthesis of riboflavin. The polypeptide is 6,7-dimethyl-8-ribityllumazine synthase (Mycobacterium avium (strain 104)).